A 905-amino-acid polypeptide reads, in one-letter code: Translation initiation factor IF-2 (905 aa).

3 disordered regions span residues 52–84 (QSHG…SKSV), 116–230 (AKKR…QKKT), and 269–318 (FEKE…FEKP). Over residues 65 to 84 (KSKTTSTARVTGSSGKSKSV) the composition is skewed to polar residues. Residues 116–138 (AKKRAEEEAKKREQVKKEAEERQ) are compositionally biased toward basic and acidic residues. Residues 165-178 (VVVKKGSKAAAAAK) are compositionally biased toward low complexity. Basic and acidic residues-rich tracts occupy residues 190–230 (PKVE…QKKT) and 269–278 (FEKERREIKR). Residues 406-575 (TRPPVVTIMG…NLQAELMELE (170 aa)) form the tr-type G domain. The interval 415-422 (GHVDHGKT) is G1. Position 415-422 (415-422 (GHVDHGKT)) interacts with GTP. A G2 region spans residues 440-444 (GITQH). A G3 region spans residues 461–464 (DTPG). Residues 461–465 (DTPGH) and 515–518 (NKMD) each bind GTP. A G4 region spans residues 515 to 518 (NKMD). A G5 region spans residues 551–553 (SAK).

It belongs to the TRAFAC class translation factor GTPase superfamily. Classic translation factor GTPase family. IF-2 subfamily.

It is found in the cytoplasm. Functionally, one of the essential components for the initiation of protein synthesis. Protects formylmethionyl-tRNA from spontaneous hydrolysis and promotes its binding to the 30S ribosomal subunits. Also involved in the hydrolysis of GTP during the formation of the 70S ribosomal complex. In Psychrobacter sp. (strain PRwf-1), this protein is Translation initiation factor IF-2.